A 259-amino-acid chain; its full sequence is Undecaprenyl-diphosphatase (259 aa).

7 helical membrane-spanning segments follow: residues 1–21, 40–60, 75–95, 101–121, 179–199, 206–226, and 239–259; these read MEIFKVIFLGIIQGLTEFLPI, QITLDVFLHFGTVIPVLIIFW, WLTILILVGIIPTGIIGILFE, LFSSVKTVGFMLLVTGFLLYL, SFLLSAPVIFGAGLVELKDAL, LTWLSIIIGTIFAALSGYFAI, and TVFAYYCWIVGIMIIILAGIF.

It belongs to the UppP family.

The protein localises to the cell inner membrane. The enzyme catalyses di-trans,octa-cis-undecaprenyl diphosphate + H2O = di-trans,octa-cis-undecaprenyl phosphate + phosphate + H(+). Its function is as follows. Catalyzes the dephosphorylation of undecaprenyl diphosphate (UPP). Confers resistance to bacitracin. This is Undecaprenyl-diphosphatase from Halothermothrix orenii (strain H 168 / OCM 544 / DSM 9562).